The primary structure comprises 290 residues: Glutamyl-Q tRNA(Asp) synthetase (290 aa).

Residues 9–13 (RFAPS) and glutamate 45 contribute to the L-glutamate site. The short motif at 12–22 (PSPSGSLHFGS) is the 'HIGH' region element. 4 residues coordinate Zn(2+): cysteine 101, cysteine 103, tyrosine 115, and cysteine 119. Positions 170 and 188 each coordinate L-glutamate. The short motif at 226-230 (KLSKQ) is the 'KMSKS' region element. Lysine 229 serves as a coordination point for ATP.

Belongs to the class-I aminoacyl-tRNA synthetase family. GluQ subfamily. It depends on Zn(2+) as a cofactor.

Functionally, catalyzes the tRNA-independent activation of glutamate in presence of ATP and the subsequent transfer of glutamate onto a tRNA(Asp). Glutamate is transferred on the 2-amino-5-(4,5-dihydroxy-2-cyclopenten-1-yl) moiety of the queuosine in the wobble position of the QUC anticodon. The protein is Glutamyl-Q tRNA(Asp) synthetase of Shewanella amazonensis (strain ATCC BAA-1098 / SB2B).